The primary structure comprises 349 residues: Putative F-box/LRR-repeat protein At3g16555 (349 aa).

One can recognise an F-box domain in the interval 1–48 (MVLLPWELEEDILSRLPPRSLVQFRSVCKRWNALFDVKSFNKDQFARA). One copy of the LRR repeat lies at 267–290 (VVWISLLTLPPNNLPNLFIVCYGI).

This is Putative F-box/LRR-repeat protein At3g16555 from Arabidopsis thaliana (Mouse-ear cress).